We begin with the raw amino-acid sequence, 728 residues long: Lanosterol synthase (728 aa).

The stretch at 117-159 (RVEMIRYIVNTAHPVDGGWGLHSVDKSTCFGTTMNYVCLRLLG) is one PFTB 1 repeat. The active-site Proton donor is the Asp-450. PFTB repeat units lie at residues 561–602 (ISSA…HTVG) and 611–657 (VKKG…ALIG).

The protein belongs to the terpene cyclase/mutase family.

The protein resides in the lipid droplet. Its subcellular location is the endoplasmic reticulum membrane. It carries out the reaction (S)-2,3-epoxysqualene = lanosterol. It participates in terpene metabolism; lanosterol biosynthesis; lanosterol from farnesyl diphosphate: step 3/3. Its function is as follows. Lanosterol synthase; part of the third module of ergosterol biosynthesis pathway that includes the late steps of the pathway. ERG7 catalyzes the cyclization of (S)-2,3 oxidosqualene to lanosterol, a reaction that forms the sterol core. The third module or late pathway involves the ergosterol synthesis itself through consecutive reactions that mainly occur in the endoplasmic reticulum (ER) membrane. Firstly, the squalene synthase ERG9 catalyzes the condensation of 2 farnesyl pyrophosphate moieties to form squalene, which is the precursor of all steroids. Squalene synthase is crucial for balancing the incorporation of farnesyl diphosphate (FPP) into sterol and nonsterol isoprene synthesis. Secondly, the squalene epoxidase ERG1 catalyzes the stereospecific oxidation of squalene to (S)-2,3-epoxysqualene, which is considered to be a rate-limiting enzyme in steroid biosynthesis. Then, the lanosterol synthase ERG7 catalyzes the cyclization of (S)-2,3 oxidosqualene to lanosterol, a reaction that forms the sterol core. In the next steps, lanosterol is transformed to zymosterol through a complex process involving various demethylation, reduction and desaturation reactions. The lanosterol 14-alpha-demethylase ERG11 (also known as CYP51) catalyzes C14-demethylation of lanosterol to produce 4,4'-dimethyl cholesta-8,14,24-triene-3-beta-ol, which is critical for ergosterol biosynthesis. The C-14 reductase ERG24 reduces the C14=C15 double bond of 4,4-dimethyl-cholesta-8,14,24-trienol to produce 4,4-dimethyl-cholesta-8,24-dienol. 4,4-dimethyl-cholesta-8,24-dienol is substrate of the C-4 demethylation complex ERG25-ERG26-ERG27 in which ERG25 catalyzes the three-step monooxygenation required for the demethylation of 4,4-dimethyl and 4alpha-methylsterols, ERG26 catalyzes the oxidative decarboxylation that results in a reduction of the 3-beta-hydroxy group at the C-3 carbon to an oxo group, and ERG27 is responsible for the reduction of the keto group on the C-3. ERG28 has a role as a scaffold to help anchor ERG25, ERG26 and ERG27 to the endoplasmic reticulum and ERG29 regulates the activity of the iron-containing C4-methylsterol oxidase ERG25. Then, the sterol 24-C-methyltransferase ERG6 catalyzes the methyl transfer from S-adenosyl-methionine to the C-24 of zymosterol to form fecosterol. The C-8 sterol isomerase ERG2 catalyzes the reaction which results in unsaturation at C-7 in the B ring of sterols and thus converts fecosterol to episterol. The sterol-C5-desaturase ERG3 then catalyzes the introduction of a C-5 double bond in the B ring to produce 5-dehydroepisterol. The C-22 sterol desaturase ERG5 further converts 5-dehydroepisterol into ergosta-5,7,22,24(28)-tetraen-3beta-ol by forming the C-22(23) double bond in the sterol side chain. Finally, ergosta-5,7,22,24(28)-tetraen-3beta-ol is substrate of the C-24(28) sterol reductase ERG4 to produce ergosterol. The protein is Lanosterol synthase of Candida albicans (strain SC5314 / ATCC MYA-2876) (Yeast).